The sequence spans 188 residues: Acireductone dioxygenase (188 aa).

Fe(2+) contacts are provided by His-97, His-99, Glu-103, and His-141. Ni(2+)-binding residues include His-97, His-99, Glu-103, and His-141.

The protein belongs to the acireductone dioxygenase (ARD) family. Monomer. It depends on Fe(2+) as a cofactor. Ni(2+) serves as cofactor.

The catalysed reaction is 1,2-dihydroxy-5-(methylsulfanyl)pent-1-en-3-one + O2 = 3-(methylsulfanyl)propanoate + CO + formate + 2 H(+). It catalyses the reaction 1,2-dihydroxy-5-(methylsulfanyl)pent-1-en-3-one + O2 = 4-methylsulfanyl-2-oxobutanoate + formate + 2 H(+). It functions in the pathway amino-acid biosynthesis; L-methionine biosynthesis via salvage pathway; L-methionine from S-methyl-5-thio-alpha-D-ribose 1-phosphate: step 5/6. Functionally, catalyzes 2 different reactions between oxygen and the acireductone 1,2-dihydroxy-3-keto-5-methylthiopentene (DHK-MTPene) depending upon the metal bound in the active site. Fe-containing acireductone dioxygenase (Fe-ARD) produces formate and 2-keto-4-methylthiobutyrate (KMTB), the alpha-ketoacid precursor of methionine in the methionine recycle pathway. Ni-containing acireductone dioxygenase (Ni-ARD) produces methylthiopropionate, carbon monoxide and formate, and does not lie on the methionine recycle pathway. This is Acireductone dioxygenase from Xanthomonas euvesicatoria pv. vesicatoria (strain 85-10) (Xanthomonas campestris pv. vesicatoria).